The chain runs to 354 residues: Selection and upkeep of intraepithelial T-cells protein 10 (354 aa).

Positions 1–52 (MFLRTQMEQSQADIFALIKPHFGVMESSASYLPGFFMTFLLLQTTVLTQAMS) are cleaved as a signal peptide. The region spanning 53–141 (LDIQINIQVP…TNREKKRSVV (89 aa)) is the Ig-like V-type domain. The Extracellular segment spans residues 53–158 (LDIQINIQVP…SEYMSLMSNK (106 aa)). An intrachain disulfide couples C71 to C125. N-linked (GlcNAc...) asparagine glycosylation is present at N129. The chain crosses the membrane as a helical span at residues 159-179 (FSCPLTYLFIIIFLNCLKGML). Residues 180–209 (DFCCLKGKPVYFRELINKIKEVLNIKMRAC) lie on the Cytoplasmic side of the membrane. The helical transmembrane segment at 210–230 (CTLIWEFLLIVLYIAFLPFYL) threads the bilayer. At 231–252 (KFRSRASILDDAYPLHSNWLWD) the chain is on the extracellular side. The helical transmembrane segment at 253–273 (ICIVLSVLMIFFTGLSLFLLW) threads the bilayer. At 274 to 354 (TLNCYGQMSY…RLDCSLNWKT (81 aa)) the chain is on the cytoplasmic side.

The protein belongs to the SKINT family. In terms of tissue distribution, expressed in skin and thymus.

Its subcellular location is the membrane. May act by engaging a cell surface molecule on immature T-cells in the embryonic thymus. This chain is Selection and upkeep of intraepithelial T-cells protein 10 (Skint10), found in Mus musculus (Mouse).